The chain runs to 439 residues: AT-hook motif nuclear-localized protein 13 (439 aa).

Disordered regions lie at residues 1–46 (MDSR…NSYN), 69–216 (QRLP…LGGT), and 342–439 (GRKQ…NSPQ). 2 stretches are compositionally biased toward low complexity: residues 9-31 (QQQQ…QQQQ) and 79-95 (PHQP…PQQQ). The span at 109 to 120 (SPSSVAATQQHS) shows a compositional bias: polar residues. A compositionally biased stretch (basic residues) spans 130–139 (VKKKRGRPRK). A Bipartite nuclear localization signal motif is present at residues 131-139 (KKKRGRPRK). The segment at residues 131 to 143 (KKKRGRPRKYAAD) is a DNA-binding region (a.T hook 1). 2 stretches are compositionally biased toward gly residues: residues 143–152 (DGGGGGGGGS) and 171–183 (YGGG…GGDS). Residues 196–208 (KRNRGRPPGSGKK) constitute a DNA-binding region (a.T hook 2). One can recognise a PPC domain in the interval 217 to 359 (GGVGFTPHVI…GRAQNTPEPA (143 aa)). Polar residues predominate over residues 347–357 (QSAGRAQNTPE). Composition is skewed to low complexity over residues 376–386 (SPRSQGQQHSS) and 403–416 (NNNN…FGNS). A compositionally biased stretch (polar residues) spans 428-439 (MYQNLWPGNSPQ).

Its subcellular location is the nucleus. In terms of biological role, transcription factor that specifically binds AT-rich DNA sequences related to the nuclear matrix attachment regions (MARs). In Arabidopsis thaliana (Mouse-ear cress), this protein is AT-hook motif nuclear-localized protein 13.